Reading from the N-terminus, the 132-residue chain is Antileukoproteinase (132 aa).

The first 24 residues, 1 to 24 (MKFSGLFPFLLLALGTLALWAVEG), serve as a signal peptide directing secretion. Residues 28–76 (EALKAGACPPRKSAQCFGNEKPRCSSDWQCPHKKKCCLDTCGTECLDPV) form the WAP 1 domain. 4 cysteine pairs are disulfide-bonded: Cys-35-Cys-64, Cys-43-Cys-68, Cys-51-Cys-63, and Cys-57-Cys-72. Asn-77 carries an N-linked (GlcNAc...) asparagine glycan. The WAP 2 domain occupies 82-130 (VKKKPGTCPVIHGQCLMLKPLNHCETDDQCIGALKCCKAMCGKVCLSPV). 4 disulfide bridges follow: Cys-89/Cys-118, Cys-96/Cys-122, Cys-105/Cys-117, and Cys-111/Cys-126.

As to quaternary structure, interacts with GRN; interaction protects progranulin from proteolysis. As to expression, detected in bronchoalveolar fluid (at protein level). Detected in large and small intestine, trachea, skin, lung and tongue.

It localises to the secreted. Functionally, acid-stable proteinase inhibitor with strong affinities for trypsin, chymotrypsin, elastase, and cathepsin G. Modulates the inflammatory and immune responses after bacterial infection, and after infection by the intracellular parasite L.major. Down-regulates responses to bacterial lipopolysaccharide (LPS). Plays a role in regulating the activation of NF-kappa-B and inflammatory responses. Has antimicrobial activity against mycobacteria, but not against salmonella. Contributes to normal resistance against infection by M.tuberculosis. Required for normal resistance to infection by L.major. Required for normal wound healing, probably by preventing tissue damage by limiting protease activity. Together with ELANE, required for normal differentiation and proliferation of bone marrow myeloid cells. This is Antileukoproteinase (SLPI) from Ovis aries (Sheep).